Here is a 625-residue protein sequence, read N- to C-terminus: Alpha-1,3-galactosidase A (625 aa).

The N-terminal stretch at 1-32 is a signal peptide; that stretch reads MAHGCSGGAMSRFVFLGVALALLGGATSPAAA. PbH1 repeat units follow at residues 342-364, 460-482, 483-505, 516-537, and 573-611; these read KGKVSITRSLFDGPHDDPINIHG, TPSVVISGNVFRNVPTRGILVTT, RKPVLITGNRFDGMSMASIYVSA, VADLTIRGNSFTRPSGPVIFVE, and VGGFAFTGNTVRRLDGADHPPYTSPLFVFHGSSGIRIAR.

The protein belongs to the glycosyl hydrolase 110 family. A subfamily.

The enzyme catalyses Hydrolysis of terminal, non-reducing branched (1-&gt;3)-alpha-D-galactosidic residues, producing free D-galactose.. The catalysed reaction is Hydrolysis of terminal, non-reducing alpha-D-galactose residues in alpha-D-galactosides, including galactose oligosaccharides, galactomannans and galactolipids.. In terms of biological role, alpha-galactosidase that specifically removes branched alpha-1,3-linked galactose residues present in blood group B antigens. Has no activity toward linear alpha-1,3-linked galactose residues. This Streptomyces avermitilis (strain ATCC 31267 / DSM 46492 / JCM 5070 / NBRC 14893 / NCIMB 12804 / NRRL 8165 / MA-4680) protein is Alpha-1,3-galactosidase A (glaA).